Reading from the N-terminus, the 73-residue chain is Small ribosomal subunit protein bS18 (73 aa).

This sequence belongs to the bacterial ribosomal protein bS18 family. In terms of assembly, part of the 30S ribosomal subunit. Forms a tight heterodimer with protein bS6.

Binds as a heterodimer with protein bS6 to the central domain of the 16S rRNA, where it helps stabilize the platform of the 30S subunit. The protein is Small ribosomal subunit protein bS18 of Prochlorococcus marinus subsp. pastoris (strain CCMP1986 / NIES-2087 / MED4).